The primary structure comprises 500 residues: MKKYIVALDQGTTSSRAIIFDKEQNIIGVSQKEFNQIYPREGWVEHDPMEIWATQYSVLQEVMAKCNITQENIAAIGITNQRETTIVWDKNTGVPIYNAIVWQCRRTADICDELKERDGLVDYIRENTGLVLDAYFSGTKIKWILDNVEGAREKAEKGELLFGTVDSWLVWKLTNGKVHVTDYTNASRTMIFNIKNLEWDERMLKELDIPRSMLPEVKNSSEIYGYANLGAKGGIRVPIAGIAGDQQAALFGQAAFNKGDVKNTYGTGCFLLMNTGEELVKSKSGLLTTIAIGLHGKVQYALEGSVFVGGAVIQWLRDELRIISDSSDTEYFATKVEDNGGVYVVPAFVGLGAPYWDMYARGTIVGLTRGTNRNHIIRAALESIAYQTRDVLEAMINDVGYDINCIKVDGGASRNNFLMQFQSDLVGKKVIKPIITETTALGAAYLAGLAVGYWSDKEEIAKLWFASEEFEPTISEERRNKYHKKWKKAVERSKGWALED.

Residue T12 coordinates ADP. ATP-binding residues include T12, T13, and S14. T12 lines the sn-glycerol 3-phosphate pocket. Residue R16 participates in ADP binding. Sn-glycerol 3-phosphate contacts are provided by R82, E83, Y135, and D245. Residues R82, E83, Y135, D245, and Q246 each coordinate glycerol. T267 and G310 together coordinate ADP. ATP-binding residues include T267, G310, Q314, and G411. Positions 411 and 415 each coordinate ADP.

The protein belongs to the FGGY kinase family. Homotetramer and homodimer (in equilibrium).

The enzyme catalyses glycerol + ATP = sn-glycerol 3-phosphate + ADP + H(+). Its pathway is polyol metabolism; glycerol degradation via glycerol kinase pathway; sn-glycerol 3-phosphate from glycerol: step 1/1. With respect to regulation, activated by phosphorylation and inhibited by fructose 1,6-bisphosphate (FBP). In terms of biological role, key enzyme in the regulation of glycerol uptake and metabolism. Catalyzes the phosphorylation of glycerol to yield sn-glycerol 3-phosphate. The polypeptide is Glycerol kinase (Clostridium perfringens (strain ATCC 13124 / DSM 756 / JCM 1290 / NCIMB 6125 / NCTC 8237 / Type A)).